A 353-amino-acid chain; its full sequence is Phospho-N-acetylmuramoyl-pentapeptide-transferase (353 aa).

10 consecutive transmembrane segments (helical) span residues Leu-24–Ala-44, Thr-66–Ala-86, Leu-88–Phe-108, Phe-129–Asp-149, Pro-160–Thr-180, Gly-192–Ala-212, Val-229–Tyr-249, Val-256–Val-276, Ile-281–Val-301, and Lys-330–Leu-350.

The protein belongs to the glycosyltransferase 4 family. MraY subfamily. It depends on Mg(2+) as a cofactor.

The protein resides in the cell inner membrane. The enzyme catalyses UDP-N-acetyl-alpha-D-muramoyl-L-alanyl-gamma-D-glutamyl-meso-2,6-diaminopimeloyl-D-alanyl-D-alanine + di-trans,octa-cis-undecaprenyl phosphate = di-trans,octa-cis-undecaprenyl diphospho-N-acetyl-alpha-D-muramoyl-L-alanyl-D-glutamyl-meso-2,6-diaminopimeloyl-D-alanyl-D-alanine + UMP. Its pathway is cell wall biogenesis; peptidoglycan biosynthesis. Functionally, catalyzes the initial step of the lipid cycle reactions in the biosynthesis of the cell wall peptidoglycan: transfers peptidoglycan precursor phospho-MurNAc-pentapeptide from UDP-MurNAc-pentapeptide onto the lipid carrier undecaprenyl phosphate, yielding undecaprenyl-pyrophosphoryl-MurNAc-pentapeptide, known as lipid I. This Helicobacter pylori (strain J99 / ATCC 700824) (Campylobacter pylori J99) protein is Phospho-N-acetylmuramoyl-pentapeptide-transferase.